The sequence spans 252 residues: 5-oxoprolinase subunit A (252 aa).

It belongs to the LamB/PxpA family. Forms a complex composed of PxpA, PxpB and PxpC.

It carries out the reaction 5-oxo-L-proline + ATP + 2 H2O = L-glutamate + ADP + phosphate + H(+). Its function is as follows. Catalyzes the cleavage of 5-oxoproline to form L-glutamate coupled to the hydrolysis of ATP to ADP and inorganic phosphate. The protein is 5-oxoprolinase subunit A of Kocuria rhizophila (strain ATCC 9341 / DSM 348 / NBRC 103217 / DC2201).